Consider the following 163-residue polypeptide: 3-isopropylmalate dehydratase small subunit (163 aa).

It belongs to the LeuD family. LeuD type 2 subfamily. In terms of assembly, heterodimer of LeuC and LeuD.

The enzyme catalyses (2R,3S)-3-isopropylmalate = (2S)-2-isopropylmalate. The protein operates within amino-acid biosynthesis; L-leucine biosynthesis; L-leucine from 3-methyl-2-oxobutanoate: step 2/4. In terms of biological role, catalyzes the isomerization between 2-isopropylmalate and 3-isopropylmalate, via the formation of 2-isopropylmaleate. The protein is 3-isopropylmalate dehydratase small subunit of Thermococcus kodakarensis (strain ATCC BAA-918 / JCM 12380 / KOD1) (Pyrococcus kodakaraensis (strain KOD1)).